The chain runs to 348 residues: Dihydroorotase (348 aa).

Residues histidine 17 and histidine 19 each coordinate Zn(2+). Residues histidine 19 to arginine 21 and asparagine 45 contribute to the substrate site. Positions 103, 140, and 178 each coordinate Zn(2+). Position 103 is an N6-carboxylysine (lysine 103). Substrate is bound at residue histidine 140. Leucine 223 lines the substrate pocket. Aspartate 251 serves as a coordination point for Zn(2+). Aspartate 251 is an active-site residue. Positions 255 and 267 each coordinate substrate.

The protein belongs to the metallo-dependent hydrolases superfamily. DHOase family. Class II DHOase subfamily. As to quaternary structure, homodimer. Zn(2+) serves as cofactor.

It catalyses the reaction (S)-dihydroorotate + H2O = N-carbamoyl-L-aspartate + H(+). It participates in pyrimidine metabolism; UMP biosynthesis via de novo pathway; (S)-dihydroorotate from bicarbonate: step 3/3. Functionally, catalyzes the reversible cyclization of carbamoyl aspartate to dihydroorotate. The sequence is that of Dihydroorotase from Shigella flexneri.